The following is a 146-amino-acid chain: Copper transporter 5 (146 aa).

A helical membrane pass occupies residues 24–44 (WLSYILTLIACFVFSAFYQYL). A disordered region spans residues 55-74 (SSSRRAPPPPRSSSGVSAPL). Residues 101 to 121 (LLMLAAMSFNGGVFIAIVVGL) form a helical membrane-spanning segment.

It belongs to the copper transporter (Ctr) (TC 1.A.56) family. SLC31A subfamily. Highly expressed in leaves and stems and at lower levels in roots and flowers.

It localises to the membrane. Involved in the transport of copper. The polypeptide is Copper transporter 5 (COPT5) (Arabidopsis thaliana (Mouse-ear cress)).